The primary structure comprises 410 residues: Methylamine dehydrogenase heavy chain (410 aa).

An N-terminal signal peptide occupies residues 1-35 (MTHAYTKVRQALCYGSATLGAAALAALIAAGSAAA).

It belongs to the aromatic amine dehydrogenase heavy chain family. In terms of assembly, tetramer of two light and two heavy chains.

The protein resides in the periplasm. The enzyme catalyses 2 oxidized [amicyanin] + methylamine + H2O = 2 reduced [amicyanin] + formaldehyde + NH4(+) + 2 H(+). Methylamine dehydrogenase carries out the oxidation of methylamine. Electrons are passed from methylamine dehydrogenase to amicyanin. The sequence is that of Methylamine dehydrogenase heavy chain (mauB) from Methylorubrum extorquens (strain ATCC 14718 / DSM 1338 / JCM 2805 / NCIMB 9133 / AM1) (Methylobacterium extorquens).